A 511-amino-acid chain; its full sequence is Sodium/hydrogen exchanger 9B1 (511 aa).

Over residues 1–10 the composition is skewed to basic and acidic residues; that stretch reads MHTTESKDEH. A disordered region spans residues 1–41; that stretch reads MHTTESKDEHLEDENFQTSTTPQSLIDPNSTAHEETKTVIS. Over residues 16-31 the composition is skewed to polar residues; sequence FQTSTTPQSLIDPNST. Helical transmembrane passes span 67–87, 95–115, 116–136, 152–172, 187–207, 215–235, 260–280, 284–304, 337–357, 368–388, 398–418, 431–451, and 472–492; these read IITNGVILFVIWCTTWSVLGS, LFGLLIIFCSAIIGGKILQLI, RIPLVPPLPPLLGMLLAGFTI, WSSILRSTALTVILIRAGLGL, LAVGPCLMEASAAAVFSHFIM, FLLGFVLGAVSPAIVVPSMMV, VLAITGFNTCLSIVFSSGGIV, IASIKSVSISLLAGIVLGFFV, IGLHGTGGLFTLVLSFIAGTK, IITNVWDIFQPLLFGLVGAEV, IGIFVATLSLALCVRILVTYI, IFIALAWMPKATVQAVLGPLV, and VAFLAILITAPNGALLMGILG.

It belongs to the monovalent cation:proton antiporter 1 (CPA1) transporter (TC 2.A.36) family.

Its subcellular location is the cell projection. It localises to the cilium. The protein localises to the flagellum membrane. Sperm-specific Na(+)/H(+) exchanger involved in intracellular pH regulation of spermatozoa. Involved in sperm motility and fertility. In Macaca fascicularis (Crab-eating macaque), this protein is Sodium/hydrogen exchanger 9B1 (SLC9B1).